Reading from the N-terminus, the 223-residue chain is Deoxyribose-phosphate aldolase (223 aa).

The Proton donor/acceptor role is filled by aspartate 91. Catalysis depends on lysine 153, which acts as the Schiff-base intermediate with acetaldehyde. The active-site Proton donor/acceptor is lysine 182.

Belongs to the DeoC/FbaB aldolase family. DeoC type 1 subfamily.

The protein resides in the cytoplasm. It catalyses the reaction 2-deoxy-D-ribose 5-phosphate = D-glyceraldehyde 3-phosphate + acetaldehyde. It participates in carbohydrate degradation; 2-deoxy-D-ribose 1-phosphate degradation; D-glyceraldehyde 3-phosphate and acetaldehyde from 2-deoxy-alpha-D-ribose 1-phosphate: step 2/2. Catalyzes a reversible aldol reaction between acetaldehyde and D-glyceraldehyde 3-phosphate to generate 2-deoxy-D-ribose 5-phosphate. The sequence is that of Deoxyribose-phosphate aldolase from Yersinia enterocolitica serotype O:8 / biotype 1B (strain NCTC 13174 / 8081).